Reading from the N-terminus, the 1493-residue chain is Son of sevenless homolog (1493 aa).

Residues 244–448 enclose the DH domain; it reads TYESVAVDFL…ERVVGCVSDM (205 aa). The PH domain maps to 496–606; sequence ELEKDGDLGM…WMAVLVKVTT (111 aa). Residues 656–824 enclose the N-terminal Ras-GEF domain; it reads GIPVIKCGTV…TILALIEKRV (169 aa). Positions 897 to 1164 constitute a Ras-GEF domain; that stretch reads HPIEIGRQLT…YNKSLEIQPK (268 aa). Disordered stretches follow at residues 1067 to 1091, 1165 to 1248, and 1263 to 1493; these read KSPP…DPEN, GLDT…DDAP, and HPKI…SSNK. Basic and acidic residues predominate over residues 1079–1088; it reads QQKDDLKASD. Composition is skewed to polar residues over residues 1208–1231 and 1279–1289; these read HSQN…NTPL and SRANQSNSVSL. Low complexity predominate over residues 1308–1326; that stretch reads STATSPTTLTTTTTPSSAG. Over residues 1350-1361 the composition is skewed to polar residues; that stretch reads LTPSRDNSSPSA. The span at 1381–1400 shows a compositional bias: low complexity; the sequence is STSSDVSSSPSTSGSTSSAT. Residues 1402 to 1417 show a composition bias toward basic and acidic residues; sequence ENQEQLRVIFDREESH. Residues 1426–1435 are compositionally biased toward pro residues; the sequence is PLPPALPPPR. Residues 1453–1464 are compositionally biased toward polar residues; that stretch reads HNSNSPTLSSEQ.

In terms of assembly, interacts with cmd-1 in the presence of Ca(2+).

In terms of biological role, promotes the exchange of Ras-bound GDP by GTP. May regulate signaling pathways downstream of receptor tyrosine kinase, egl-15 and let-23. Required for larval and male spicule development, fluid homeostasis, vulva induction, spermatogenesis, and oogenesis by promoting meiosis prophase exit during oocyte maturation. Required for the delamination of G1 cell by promoting the loss of cell junctions and detachment from the excretory system during larval development. Plays a role in nicotinic acetylcholine receptor (nAChR)-mediated sensitivity to nicotine. Regulates synaptic levels of nAchR subunit lev-1 in the nerve cord. This is Son of sevenless homolog from Caenorhabditis elegans.